A 306-amino-acid chain; its full sequence is Protoheme IX farnesyltransferase (306 aa).

Helical transmembrane passes span leucine 35–leucine 55, leucine 61–valine 81, leucine 106–valine 126, leucine 129–leucine 149, isoleucine 157–glycine 177, alanine 183–leucine 203, glutamate 224–proline 244, phenylalanine 245–phenylalanine 265, and arginine 286–isoleucine 306.

This sequence belongs to the UbiA prenyltransferase family. Protoheme IX farnesyltransferase subfamily.

It is found in the cell inner membrane. The enzyme catalyses heme b + (2E,6E)-farnesyl diphosphate + H2O = Fe(II)-heme o + diphosphate. It participates in porphyrin-containing compound metabolism; heme O biosynthesis; heme O from protoheme: step 1/1. Its function is as follows. Converts heme B (protoheme IX) to heme O by substitution of the vinyl group on carbon 2 of heme B porphyrin ring with a hydroxyethyl farnesyl side group. In Polaromonas naphthalenivorans (strain CJ2), this protein is Protoheme IX farnesyltransferase.